The primary structure comprises 451 residues: Bifunctional protein GlmU (451 aa).

The segment at Met-1–Arg-217 is pyrophosphorylase. Residues Leu-6 to Gly-9, Lys-20, Gln-68, Gly-73 to Thr-74, Tyr-95 to Asp-97, Gly-134, Glu-146, Asn-161, and Asn-215 contribute to the UDP-N-acetyl-alpha-D-glucosamine site. A Mg(2+)-binding site is contributed by Asp-97. Residue Asn-215 participates in Mg(2+) binding. Positions Ile-218–Glu-238 are linker. An N-acetyltransferase region spans residues Gly-239 to Glu-451. Residues Arg-320 and Lys-338 each coordinate UDP-N-acetyl-alpha-D-glucosamine. His-350 functions as the Proton acceptor in the catalytic mechanism. Tyr-353 and Asn-364 together coordinate UDP-N-acetyl-alpha-D-glucosamine. Residues Ala-367, Asn-373–Tyr-374, Ser-392, Ala-410, and Arg-427 contribute to the acetyl-CoA site.

The protein in the N-terminal section; belongs to the N-acetylglucosamine-1-phosphate uridyltransferase family. It in the C-terminal section; belongs to the transferase hexapeptide repeat family. As to quaternary structure, homotrimer. It depends on Mg(2+) as a cofactor.

The protein resides in the cytoplasm. The enzyme catalyses alpha-D-glucosamine 1-phosphate + acetyl-CoA = N-acetyl-alpha-D-glucosamine 1-phosphate + CoA + H(+). It catalyses the reaction N-acetyl-alpha-D-glucosamine 1-phosphate + UTP + H(+) = UDP-N-acetyl-alpha-D-glucosamine + diphosphate. It functions in the pathway nucleotide-sugar biosynthesis; UDP-N-acetyl-alpha-D-glucosamine biosynthesis; N-acetyl-alpha-D-glucosamine 1-phosphate from alpha-D-glucosamine 6-phosphate (route II): step 2/2. It participates in nucleotide-sugar biosynthesis; UDP-N-acetyl-alpha-D-glucosamine biosynthesis; UDP-N-acetyl-alpha-D-glucosamine from N-acetyl-alpha-D-glucosamine 1-phosphate: step 1/1. The protein operates within bacterial outer membrane biogenesis; LPS lipid A biosynthesis. Its function is as follows. Catalyzes the last two sequential reactions in the de novo biosynthetic pathway for UDP-N-acetylglucosamine (UDP-GlcNAc). The C-terminal domain catalyzes the transfer of acetyl group from acetyl coenzyme A to glucosamine-1-phosphate (GlcN-1-P) to produce N-acetylglucosamine-1-phosphate (GlcNAc-1-P), which is converted into UDP-GlcNAc by the transfer of uridine 5-monophosphate (from uridine 5-triphosphate), a reaction catalyzed by the N-terminal domain. This Thermosipho africanus (strain TCF52B) protein is Bifunctional protein GlmU.